The chain runs to 522 residues: Coiled-coil domain-containing protein 149-B (522 aa).

Coiled-coil stretches lie at residues 1 to 196 (MANQ…LESK) and 260 to 287 (IRHQRQTNKILGNRVAELERKLKTLEVS). The interval 413 to 522 (ACTAERSEQH…TSPHQECPSS (110 aa)) is disordered. Composition is skewed to polar residues over residues 429 to 438 (GGHQSMSTEA), 467 to 490 (QPVTSETSGSFDCISGSESCTAEQ), and 503 to 522 (ASLNTSPPEQTSPHQECPSS).

This sequence belongs to the CCDC149 family.

This Danio rerio (Zebrafish) protein is Coiled-coil domain-containing protein 149-B (ccdc149b).